We begin with the raw amino-acid sequence, 316 residues long: Olfactory receptor 2AG2 (316 aa).

The Extracellular segment spans residues 1–30 (MELRNSTLGSGFILVGILNDSGSPELLYAT). Residues asparagine 5 and asparagine 19 are each glycosylated (N-linked (GlcNAc...) asparagine). A helical membrane pass occupies residues 31–51 (FTILYMLALTSNGLLLLAITI). Residues 52–56 (EARLH) are Cytoplasmic-facing. Residues 57–77 (MPMYLLLGQLSLMDLLFTSVV) form a helical membrane-spanning segment. Residues 78 to 97 (TPKALADFLRRENTISFGGC) lie on the Extracellular side of the membrane. Cysteine 97 and cysteine 179 are disulfide-bonded. Residues 98–118 (ALQMFLALTMGSAEDLLLAFM) traverse the membrane as a helical segment. Over 119–139 (AYDRYVAICHPLKYMTLMSPR) the chain is Cytoplasmic. Residues 140 to 160 (VCWIMVATSWILASLIAIGHT) form a helical membrane-spanning segment. The Extracellular segment spans residues 161–205 (MYTMHLPFCVSWEIRHLLCEIPPLLKLACADTSRYELIIYVTGVT). Residues 206-226 (FLLLPISAIVASYTLVLFTVL) traverse the membrane as a helical segment. Residues 227–244 (RMPSNEGRKKALVTCSSH) are Cytoplasmic-facing. The helical transmembrane segment at 245 to 265 (LIVVGMFYGAATFMYVLPSSF) threads the bilayer. Residues 266–271 (HSPKQD) lie on the Extracellular side of the membrane. A helical transmembrane segment spans residues 272 to 292 (NIISVFYTIVTPALNPLIYSL). At 293–316 (RNKEVMRALRRVLGKYILLAHSTL) the chain is on the cytoplasmic side.

This sequence belongs to the G-protein coupled receptor 1 family.

The protein resides in the cell membrane. Odorant receptor. This Homo sapiens (Human) protein is Olfactory receptor 2AG2 (OR2AG2).